Here is a 417-residue protein sequence, read N- to C-terminus: NADH-quinone oxidoreductase subunit D 1 (417 aa).

This sequence belongs to the complex I 49 kDa subunit family. In terms of assembly, NDH-1 is composed of 14 different subunits. Subunits NuoB, C, D, E, F, and G constitute the peripheral sector of the complex.

The protein localises to the cell membrane. The catalysed reaction is a quinone + NADH + 5 H(+)(in) = a quinol + NAD(+) + 4 H(+)(out). NDH-1 shuttles electrons from NADH, via FMN and iron-sulfur (Fe-S) centers, to quinones in the respiratory chain. The immediate electron acceptor for the enzyme in this species is believed to be ubiquinone. Couples the redox reaction to proton translocation (for every two electrons transferred, four hydrogen ions are translocated across the cytoplasmic membrane), and thus conserves the redox energy in a proton gradient. The chain is NADH-quinone oxidoreductase subunit D 1 from Roseiflexus castenholzii (strain DSM 13941 / HLO8).